A 125-amino-acid chain; its full sequence is Large ribosomal subunit protein uL18 (125 aa).

The protein belongs to the universal ribosomal protein uL18 family. In terms of assembly, part of the 50S ribosomal subunit; part of the 5S rRNA/L5/L18/L25 subcomplex. Contacts the 5S and 23S rRNAs.

This is one of the proteins that bind and probably mediate the attachment of the 5S RNA into the large ribosomal subunit, where it forms part of the central protuberance. The polypeptide is Large ribosomal subunit protein uL18 (Anaplasma marginale (strain Florida)).